Consider the following 728-residue polypeptide: Catalase-peroxidase (728 aa).

Residues 91 to 218 (WHSAGTYRIA…LAAVQMGLIY (128 aa)) constitute a cross-link (tryptophyl-tyrosyl-methioninium (Trp-Tyr) (with M-244)). The active-site Proton acceptor is the His92. The tryptophyl-tyrosyl-methioninium (Tyr-Met) (with W-91) cross-link spans 218 to 244 (YVNPEGPDGNPDPVAAARDIRETFARM). His259 is a binding site for heme b.

It belongs to the peroxidase family. Peroxidase/catalase subfamily. In terms of assembly, homodimer or homotetramer. It depends on heme b as a cofactor. Post-translationally, formation of the three residue Trp-Tyr-Met cross-link is important for the catalase, but not the peroxidase activity of the enzyme.

It carries out the reaction H2O2 + AH2 = A + 2 H2O. The catalysed reaction is 2 H2O2 = O2 + 2 H2O. Bifunctional enzyme with both catalase and broad-spectrum peroxidase activity. The protein is Catalase-peroxidase of Burkholderia multivorans (strain ATCC 17616 / 249).